We begin with the raw amino-acid sequence, 452 residues long: Enolase (452 aa).

Residue Q167 coordinates (2R)-2-phosphoglycerate. The active-site Proton donor is the E209. Mg(2+) contacts are provided by D250, E307, and D334. K359, R388, S389, and K410 together coordinate (2R)-2-phosphoglycerate. The active-site Proton acceptor is K359.

The protein belongs to the enolase family. Requires Mg(2+) as cofactor.

It is found in the cytoplasm. Its subcellular location is the secreted. It localises to the cell surface. It carries out the reaction (2R)-2-phosphoglycerate = phosphoenolpyruvate + H2O. Its pathway is carbohydrate degradation; glycolysis; pyruvate from D-glyceraldehyde 3-phosphate: step 4/5. Functionally, catalyzes the reversible conversion of 2-phosphoglycerate (2-PG) into phosphoenolpyruvate (PEP). It is essential for the degradation of carbohydrates via glycolysis. This Mesomycoplasma hyopneumoniae (strain 7448) (Mycoplasma hyopneumoniae) protein is Enolase.